We begin with the raw amino-acid sequence, 779 residues long: Polyribonucleotide nucleotidyltransferase (779 aa).

The Mg(2+) site is built by Asp490 and Asp496. Residues 557 to 618 enclose the KH domain; sequence PHILSLKINP…EAVKARIEAV (62 aa). Residues 625–693 form the S1 motif domain; the sequence is GEEFEGTVVK…DRGKIDLIRP (69 aa). Over residues 699-752 the composition is skewed to basic and acidic residues; the sequence is VPLREPRAPRGGDRGPRRDSDRGGDRGPRREFSDRGPRPEGARSERPEGQRTER. The tract at residues 699 to 779 is disordered; the sequence is VPLREPRAPR…AAPVFPRRED (81 aa). Over residues 757-767 the composition is skewed to polar residues; the sequence is PATQESSQSSD.

The protein belongs to the polyribonucleotide nucleotidyltransferase family. The cofactor is Mg(2+).

It localises to the cytoplasm. The catalysed reaction is RNA(n+1) + phosphate = RNA(n) + a ribonucleoside 5'-diphosphate. In terms of biological role, involved in mRNA degradation. Catalyzes the phosphorolysis of single-stranded polyribonucleotides processively in the 3'- to 5'-direction. This chain is Polyribonucleotide nucleotidyltransferase, found in Deinococcus radiodurans (strain ATCC 13939 / DSM 20539 / JCM 16871 / CCUG 27074 / LMG 4051 / NBRC 15346 / NCIMB 9279 / VKM B-1422 / R1).